Reading from the N-terminus, the 39-residue chain is Omega-theraphotoxin-Ba1a (39 aa).

3 cysteine pairs are disulfide-bonded: cysteine 4–cysteine 25, cysteine 8–cysteine 31, and cysteine 17–cysteine 36.

Belongs to the neurotoxin 12 (Hwtx-2) family. 06 (TXP1) subfamily. Expressed by the venom gland.

The protein resides in the secreted. Inhibits voltage-gated calcium channels (Cav) in rat cerebellar granule cells. Has insecticidal activity to crickets (Acheta domesticus). Is not toxic to mice. This is Omega-theraphotoxin-Ba1a from Brachypelma albiceps (Mexican golden redrump tarantula).